The sequence spans 395 residues: Crh-like protein 5 (395 aa).

The N-terminal stretch at methionine 1 to alanine 19 is a signal peptide. Cysteines 25 and 32 form a disulfide. The region spanning alanine 45–alanine 230 is the GH16 domain. Residue glutamate 119 is the Nucleophile of the active site. Glutamate 123 (proton donor) is an active-site residue. Chitin is bound by residues glutamate 123, arginine 203, tryptophan 207, and threonine 218. A disordered region spans residues isoleucine 271–serine 374. Low complexity-rich tracts occupy residues serine 272–glycine 338 and glycine 348–threonine 364. The N-linked (GlcNAc...) asparagine glycan is linked to asparagine 319. Glycine 370 is lipidated: GPI-like-anchor amidated glycine. Positions alanine 371–phenylalanine 395 are cleaved as a propeptide — removed in mature form.

This sequence belongs to the glycosyl hydrolase 16 family. CRH1 subfamily. Post-translationally, the GPI-like anchor contains a phosphoceramide lipid group. The anchor position has not been determined.

It localises to the cell membrane. It is found in the secreted. The protein resides in the cell wall. The enzyme catalyses Random endo-hydrolysis of N-acetyl-beta-D-glucosaminide (1-&gt;4)-beta-linkages in chitin and chitodextrins.. Dual chitinase/transglycosylase that plays a role in cell wall architecture. Chitinase and transglycosylase activities are coupled. Required for the polysaccharide cross-linking at the septa and the cell wall. More specifically, transfers chitin to 1,6-beta-glucan in the cell wall. Chr5 shows acceptor substrate promiscuity and is also able to cross-link chitin to chitin. This is Crh-like protein 5 from Aspergillus fumigatus (strain ATCC MYA-4609 / CBS 101355 / FGSC A1100 / Af293) (Neosartorya fumigata).